The primary structure comprises 283 residues: MAAQIINGFELAKEKRAQLAKEVEQLKREGIEPALAVILVGDHPASQSYVKAKQKACEEIGIRSILLTFPNDISESFLLEQIARLNKDRSIHGILVQLPLPSQINELHVIEAIAPEKDVDGFHPLNVGRMMIGQRAFLPCTPYGILYMVQSLQVDIIGKHVVVVGRSHIVGKPVGQLFLREHATVTYCHSRTNDLEAITRQADILIVAVGKPKLITSSYVKEGAIVIDVGVNRLENGKLCGDVDFDDVKQVASYITPVPKGVGPMTITMLLHNTVQAAREQHK.

NADP(+) contacts are provided by residues 165 to 167 (GRS), serine 190, and valine 231.

Belongs to the tetrahydrofolate dehydrogenase/cyclohydrolase family. As to quaternary structure, homodimer.

It catalyses the reaction (6R)-5,10-methylene-5,6,7,8-tetrahydrofolate + NADP(+) = (6R)-5,10-methenyltetrahydrofolate + NADPH. It carries out the reaction (6R)-5,10-methenyltetrahydrofolate + H2O = (6R)-10-formyltetrahydrofolate + H(+). Its pathway is one-carbon metabolism; tetrahydrofolate interconversion. In terms of biological role, catalyzes the oxidation of 5,10-methylenetetrahydrofolate to 5,10-methenyltetrahydrofolate and then the hydrolysis of 5,10-methenyltetrahydrofolate to 10-formyltetrahydrofolate. The chain is Bifunctional protein FolD from Anoxybacillus flavithermus (strain DSM 21510 / WK1).